Consider the following 59-residue polypeptide: Large ribosomal subunit protein bL32C (59 aa).

This sequence belongs to the bacterial ribosomal protein bL32 family.

The polypeptide is Large ribosomal subunit protein bL32C (rpmF3) (Enterococcus faecalis (strain ATCC 700802 / V583)).